A 109-amino-acid polypeptide reads, in one-letter code: Parvalbumin beta-1 (109 aa).

Residue S2 is modified to N-acetylserine. EF-hand domains follow at residues 39-74 (KSHEEVKKAFFVIDQDQSGFIEEDELKLFLQTFGAG) and 78-109 (LTAAETKAFLAAGDEDGDGMIGVDEFVTLVKA). Ca(2+) is bound by residues D52, D54, S56, F58, E60, E63, D91, D93, D95, M97, and E102.

It belongs to the parvalbumin family.

In terms of biological role, in muscle, parvalbumin is thought to be involved in relaxation after contraction. It binds two calcium ions. The protein is Parvalbumin beta-1 of Gadus chalcogrammus (Alaska pollock).